Consider the following 268-residue polypeptide: MPRSFLVKKHFNASKKPNYSELDTHTVIISPYLCESYPMPVIPKPEILTSGAYSPITVWTSAVPFHSPLPSGLSPLTGYSSSLGRVSPLPSSDTSSKDHSGSESPISDEEERLQPKLSDPHAIEAEKFQCNLCNKTYSTFSGLAKHKQLHCDAQARKSFSCKYCDKEYVSLGALKMHIRTHTLPCVCKICGKAFSRPWLLQGHIRTHTGEKPFSCPHCNRAFADRSNLRAHLQTHSDVKKYQCKNCSKTFSRMSLLHKHEESGCCVAH.

The interval Met-1–Ser-20 is SNAG domain. The segment at Gly-84–Lys-116 is disordered. 4 consecutive C2H2-type zinc fingers follow at residues Phe-128 to His-150, Phe-159 to His-181, Cys-185 to His-207, and Phe-213 to His-235. The segment at Tyr-241–Cys-264 adopts a C2H2-type 5; atypical zinc-finger fold.

The protein belongs to the snail C2H2-type zinc-finger protein family. In terms of assembly, interacts (via SNAG domain) with LIMD1 (via LIM domains), WTIP (via LIM domains) and AJUBA (via LIM domains). Interacts (via zinc fingers) with KPNA2, KPNB1 and TNPO1. May interact (via zinc fingers) with IPO7. Post-translationally, phosphorylated by GSK3B. Once phosphorylated, it becomes a target for ubiquitination. Ubiquitinated by the SCF(FBXO11) complex; ubiquitination requires previous GSK3B-mediated SNAI2 phosphorylation.

It localises to the nucleus. The protein resides in the cytoplasm. In terms of biological role, transcriptional repressor that modulates both activator-dependent and basal transcription. Involved in the generation and migration of neural crest cells. Plays a role in mediating RAF1-induced transcriptional repression of the TJ protein, occludin (OCLN) and subsequent oncogenic transformation of epithelial cells. Represses BRCA2 expression by binding to its E2-box-containing silencer and recruiting CTBP1 and HDAC1 in breast cells. In epidermal keratinocytes, binds to the E-box in ITGA3 promoter and represses its transcription. Involved in the regulation of ITGB1 and ITGB4 expression and cell adhesion and proliferation in epidermal keratinocytes. Binds to E-box2 domain of BSG and activates its expression during TGFB1-induced epithelial-mesenchymal transition (EMT) in hepatocytes. Represses E-Cadherin/CDH1 transcription via E-box elements. Involved in osteoblast maturation. Binds to RUNX2 and SOC9 promoters and may act as a positive and negative transcription regulator, respectively, in osteoblasts. Binds to CXCL12 promoter via E-box regions in mesenchymal stem cells and osteoblasts. Plays an essential role in TWIST1-induced EMT and its ability to promote invasion and metastasis. This is Zinc finger protein SNAI2 (Snai2) from Rattus norvegicus (Rat).